Consider the following 822-residue polypeptide: Collagen alpha chain CG42342 (822 aa).

Disordered regions lie at residues 1 to 45 (MRKH…VEAP) and 66 to 99 (RLAP…KERP). Over 1 to 104 (MRKHKAPPSG…SKERPRPTVR (104 aa)) the chain is Cytoplasmic. A compositionally biased stretch (polar residues) spans 11 to 25 (SPRTMAQDNSQSEPS). Residues 76-94 (INNSNNNSNISNNSSNSSS) show a composition bias toward low complexity. Residues 105-125 (FISLLHVASYVLCLCAFSFAL) traverse the membrane as a helical; Signal-anchor for type II membrane protein segment. Residues 126–822 (YGNVRQTRLE…EYQDNLHNNE (697 aa)) lie on the Extracellular side of the membrane. A coiled-coil region spans residues 131–162 (QTRLEQRMQRLQQLDARIVELELRLEQQQLLH). Disordered regions lie at residues 169 to 188 (QVLA…NGSQ), 205 to 297 (VSHL…GHPG), and 345 to 822 (LKGE…HNNE). Residues 194 to 222 (VRRELHRLRRDVSHLQLTRRQQRRQAAEA) adopt a coiled-coil conformation. Collagen-like domains follow at residues 241–299 (QPGP…PGMD), 350–409 (GEPG…KGDR), 430–469 (GPPG…GKRG), 493–526 (RGPP…PGSL), 527–586 (GPRG…KGDK), 621–680 (GPPG…SGKA), and 681–740 (GIPG…KGEQ). Residues 242–251 (PGPPGPPGPP) show a composition bias toward pro residues. Residues 284-293 (PGDKGQKGDV) are compositionally biased toward basic and acidic residues. The segment covering 360 to 402 (EAGQPGAPGERGPPGEIGAQGPQGEAGQPGVAGPPGVAGAPGT) has biased composition (low complexity). The segment covering 403–412 (KGDKGDRGDR) has biased composition (basic and acidic residues). Pro residues predominate over residues 431–443 (PPGPAGPPGPPGE). The span at 504–517 (KDGRDGRDGSKGEP) shows a compositional bias: basic and acidic residues. The span at 522–540 (EPGSLGPRGLDGLPGEPGI) shows a compositional bias: low complexity. The segment covering 567–579 (LMGPPGLPGPPGY) has biased composition (pro residues). Basic and acidic residues predominate over residues 583–602 (KGDKGDRGDSYRKMRRRQDD). Pro residues predominate over residues 619–628 (PPGPPGPMGP). Residues 638–655 (RGLDGRKGDPGEKGHKGD) are compositionally biased toward basic and acidic residues. A compositionally biased stretch (low complexity) spans 658 to 668 (PMGLPGPMGMR). The stretch at 790–822 (TSDYEQEEEEDDEQAEDNENEYDEYQDNLHNNE) forms a coiled coil. The segment covering 793–815 (YEQEEEEDDEQAEDNENEYDEYQ) has biased composition (acidic residues).

Its subcellular location is the cell membrane. The sequence is that of Collagen alpha chain CG42342 from Drosophila melanogaster (Fruit fly).